A 328-amino-acid chain; its full sequence is Tetraacyldisaccharide 4'-kinase (328 aa).

Residue 58 to 65 (TMGGAGKT) coordinates ATP.

Belongs to the LpxK family.

The enzyme catalyses a lipid A disaccharide + ATP = a lipid IVA + ADP + H(+). It participates in glycolipid biosynthesis; lipid IV(A) biosynthesis; lipid IV(A) from (3R)-3-hydroxytetradecanoyl-[acyl-carrier-protein] and UDP-N-acetyl-alpha-D-glucosamine: step 6/6. Functionally, transfers the gamma-phosphate of ATP to the 4'-position of a tetraacyldisaccharide 1-phosphate intermediate (termed DS-1-P) to form tetraacyldisaccharide 1,4'-bis-phosphate (lipid IVA). This Phenylobacterium zucineum (strain HLK1) protein is Tetraacyldisaccharide 4'-kinase.